Consider the following 326-residue polypeptide: tRNA-modifying protein YgfZ (326 aa).

The folate site is built by Trp27 and Trp189.

It belongs to the tRNA-modifying YgfZ family.

The protein resides in the cytoplasm. In terms of biological role, folate-binding protein involved in regulating the level of ATP-DnaA and in the modification of some tRNAs. It is probably a key factor in regulatory networks that act via tRNA modification, such as initiation of chromosomal replication. The sequence is that of tRNA-modifying protein YgfZ from Escherichia coli (strain SE11).